The chain runs to 253 residues: Triosephosphate isomerase (253 aa).

15 to 17 is a substrate binding site; the sequence is NWK. Histidine 101 acts as the Electrophile in catalysis. The active-site Proton acceptor is the glutamate 171. Substrate contacts are provided by residues glycine 177, serine 216, and 237–238; that span reads GG.

The protein belongs to the triosephosphate isomerase family. In terms of assembly, homodimer.

It is found in the cytoplasm. It carries out the reaction D-glyceraldehyde 3-phosphate = dihydroxyacetone phosphate. It participates in carbohydrate biosynthesis; gluconeogenesis. The protein operates within carbohydrate degradation; glycolysis; D-glyceraldehyde 3-phosphate from glycerone phosphate: step 1/1. Functionally, involved in the gluconeogenesis. Catalyzes stereospecifically the conversion of dihydroxyacetone phosphate (DHAP) to D-glyceraldehyde-3-phosphate (G3P). This chain is Triosephosphate isomerase, found in Caulobacter vibrioides (strain ATCC 19089 / CIP 103742 / CB 15) (Caulobacter crescentus).